Consider the following 295-residue polypeptide: Acetaldehyde dehydrogenase (295 aa).

11-14 (SGNI) is an NAD(+) binding site. Cys-127 (acyl-thioester intermediate) is an active-site residue. Residues 158-166 (SAGPGTRAN) and Asn-270 contribute to the NAD(+) site.

It belongs to the acetaldehyde dehydrogenase family.

It catalyses the reaction acetaldehyde + NAD(+) + CoA = acetyl-CoA + NADH + H(+). The chain is Acetaldehyde dehydrogenase (nbaJ) from Geobacillus thermodenitrificans (strain NG80-2).